Consider the following 214-residue polypeptide: Pyridoxine/pyridoxamine 5'-phosphate oxidase (214 aa).

Substrate-binding positions include 8-11 (RKSY) and Lys67. FMN-binding positions include 62 to 67 (RVVLLK), 77 to 78 (YT), Lys84, and Gln106. Substrate contacts are provided by Tyr124, Arg128, and Ser132. Residues 141–142 (QS) and Trp186 each bind FMN. 192–194 (RLH) is a substrate binding site. Arg196 serves as a coordination point for FMN.

This sequence belongs to the pyridoxamine 5'-phosphate oxidase family. In terms of assembly, homodimer. The cofactor is FMN.

It carries out the reaction pyridoxamine 5'-phosphate + O2 + H2O = pyridoxal 5'-phosphate + H2O2 + NH4(+). The catalysed reaction is pyridoxine 5'-phosphate + O2 = pyridoxal 5'-phosphate + H2O2. Its pathway is cofactor metabolism; pyridoxal 5'-phosphate salvage; pyridoxal 5'-phosphate from pyridoxamine 5'-phosphate: step 1/1. It functions in the pathway cofactor metabolism; pyridoxal 5'-phosphate salvage; pyridoxal 5'-phosphate from pyridoxine 5'-phosphate: step 1/1. Functionally, catalyzes the oxidation of either pyridoxine 5'-phosphate (PNP) or pyridoxamine 5'-phosphate (PMP) into pyridoxal 5'-phosphate (PLP). This is Pyridoxine/pyridoxamine 5'-phosphate oxidase from Flavobacterium psychrophilum (strain ATCC 49511 / DSM 21280 / CIP 103535 / JIP02/86).